A 223-amino-acid chain; its full sequence is Large ribosomal subunit protein uL3 (223 aa).

This sequence belongs to the universal ribosomal protein uL3 family. Part of the 50S ribosomal subunit. Forms a cluster with proteins L14 and L19.

Functionally, one of the primary rRNA binding proteins, it binds directly near the 3'-end of the 23S rRNA, where it nucleates assembly of the 50S subunit. This Mycoplasma capricolum subsp. capricolum (strain California kid / ATCC 27343 / NCTC 10154) protein is Large ribosomal subunit protein uL3.